The sequence spans 479 residues: Poly(A) polymerase catalytic subunit (479 aa).

Residues D202 and D204 contribute to the active site. Residues D202, D204, and D253 each coordinate Ca(2+).

The protein belongs to the poxviridae poly(A) polymerase catalytic subunit family. In terms of assembly, heterodimer of a large (catalytic) subunit and a small (regulatory) subunit.

It catalyses the reaction RNA(n) + ATP = RNA(n)-3'-adenine ribonucleotide + diphosphate. Polymerase that creates the 3'-poly(A) tail of mRNA's. The protein is Poly(A) polymerase catalytic subunit (OPG063) of Bos taurus (Bovine).